A 392-amino-acid chain; its full sequence is Flavohemoprotein (392 aa).

A Globin domain is found at 1–139; that stretch reads MLNAEQRAII…LADILIGAEE (139 aa). Heme b is bound at residue His-85. Catalysis depends on charge relay system residues Tyr-95 and Glu-138. The interval 150-392 is reductase; it reads GGWRGTREFR…EFFGPAAALE (243 aa). The FAD-binding FR-type domain maps to 153–256; the sequence is RGTREFRLVR…FPPAGDFTLA (104 aa). FAD-binding positions include Tyr-191 and 205–208; that span reads RNYS. 268-273 is a binding site for NADP(+); the sequence is GVGITP. Residue 384-387 participates in FAD binding; sequence FFGP.

This sequence belongs to the globin family. Two-domain flavohemoproteins subfamily. It in the C-terminal section; belongs to the flavoprotein pyridine nucleotide cytochrome reductase family. Requires heme b as cofactor. FAD is required as a cofactor.

It catalyses the reaction 2 nitric oxide + NADPH + 2 O2 = 2 nitrate + NADP(+) + H(+). It carries out the reaction 2 nitric oxide + NADH + 2 O2 = 2 nitrate + NAD(+) + H(+). Its function is as follows. Is involved in NO detoxification in an aerobic process, termed nitric oxide dioxygenase (NOD) reaction that utilizes O(2) and NAD(P)H to convert NO to nitrate, which protects the bacterium from various noxious nitrogen compounds. Therefore, plays a central role in the inducible response to nitrosative stress. This Pseudomonas putida (strain ATCC 47054 / DSM 6125 / CFBP 8728 / NCIMB 11950 / KT2440) protein is Flavohemoprotein.